A 466-amino-acid polypeptide reads, in one-letter code: DNA repair protein RadA (466 aa).

A C4-type zinc finger spans residues 12-29; the sequence is CSECQHVAPKWVGRCANC. 100 to 107 contacts ATP; sequence GDPGVGKS. The RadA KNRFG motif motif lies at 261–265; the sequence is KNRFG. A lon-protease-like region spans residues 359–466; it reads DLYLSTVGGM…MREIAIAGAQ (108 aa).

The protein belongs to the RecA family. RadA subfamily. As to quaternary structure, interacts with DisA.

DNA-dependent ATPase involved in processing of recombination intermediates, plays a role in repairing DNA breaks. Stimulates the branch migration of RecA-mediated strand transfer reactions, allowing the 3' invading strand to extend heteroduplex DNA faster. Binds ssDNA in the presence of ADP but not other nucleotides, has ATPase activity that is stimulated by ssDNA and various branched DNA structures, but inhibited by SSB. Does not have RecA's homology-searching function. Also inhibits the diadenylate cyclase activity of DisA. The protein is DNA repair protein RadA of Mycolicibacterium smegmatis (strain ATCC 700084 / mc(2)155) (Mycobacterium smegmatis).